A 476-amino-acid chain; its full sequence is Angiotensinogen (476 aa).

A signal peptide spans 1-24; sequence MAPAGLSLGATILCLLAWAGLAAG. Cysteine 42 and cysteine 161 form a disulfide bridge. The segment at 45 to 64 is disordered; sequence LEKPSVETPADPTLTPVPIQ. Residue asparagine 295 is glycosylated (N-linked (GlcNAc...) asparagine).

Belongs to the serpin family. In response to low blood pressure, the enzyme renin/REN cleaves angiotensinogen to produce angiotensin-1. Angiotensin-1 is a substrate of ACE (angiotensin converting enzyme) that removes a dipeptide to yield the physiologically active peptide angiotensin-2. Angiotensin-1 and angiotensin-2 can be further processed to generate angiotensin-3, angiotensin-4. Angiotensin 1-9 is cleaved from angiotensin-1 by ACE2 and can be further processed by ACE to produce angiotensin 1-7, angiotensin 1-5 and angiotensin 1-4. Angiotensin 1-7 has also been proposed to be cleaved from angiotensin-2 by ACE2 or from angiotensin-1 by MME (neprilysin). In terms of processing, the disulfide bond is labile. Angiotensinogen is present in the circulation in a near 40:60 ratio with the oxidized disulfide-bonded form, which preferentially interacts with receptor-bound renin.

It localises to the secreted. Its function is as follows. Essential component of the renin-angiotensin system (RAS), a potent regulator of blood pressure, body fluid and electrolyte homeostasis. Acts directly on vascular smooth muscle as a potent vasoconstrictor, affects cardiac contractility and heart rate through its action on the sympathetic nervous system, and alters renal sodium and water absorption through its ability to stimulate the zona glomerulosa cells of the adrenal cortex to synthesize and secrete aldosterone. Acts by binding to angiotensin receptors AGTR1 and AGTR2. Also binds the DEAR/FBXW7-AS1 receptor. Functionally, stimulates aldosterone release. In terms of biological role, is a ligand for the G-protein coupled receptor MAS1. Has vasodilator and antidiuretic effects. Has an antithrombotic effect that involves MAS1-mediated release of nitric oxide from platelets. The polypeptide is Angiotensinogen (AGT) (Ovis aries (Sheep)).